The sequence spans 123 residues: Small ribosomal subunit protein bS18 (123 aa).

Polar residues predominate over residues 1–10 (MADETTVSTP). Positions 1-52 (MADETTVSTPAASGTETPSTGGGGAPQGRPQGGPRGDRGPRPGGSGRDGGRK) are disordered. Residues 20–34 (TGGGGAPQGRPQGGP) show a composition bias toward gly residues.

This sequence belongs to the bacterial ribosomal protein bS18 family. Part of the 30S ribosomal subunit. Forms a tight heterodimer with protein bS6.

In terms of biological role, binds as a heterodimer with protein bS6 to the central domain of the 16S rRNA, where it helps stabilize the platform of the 30S subunit. This is Small ribosomal subunit protein bS18 from Koribacter versatilis (strain Ellin345).